We begin with the raw amino-acid sequence, 361 residues long: Probable mannitol dehydrogenase (361 aa).

Residues Cys51, His73, Cys104, Cys107, Cys110, Cys118, and Cys167 each contribute to the Zn(2+) site.

It belongs to the zinc-containing alcohol dehydrogenase family. The cofactor is Zn(2+).

It catalyses the reaction D-mannitol + NAD(+) = D-mannose + NADH + H(+). Its function is as follows. Oxidizes mannitol to mannose. Provides the initial step by which translocated mannitol is committed to central metabolism and, by regulating mannitol pool size, is important in regulating salt tolerance at the cellular level. This chain is Probable mannitol dehydrogenase (ELI3), found in Mesembryanthemum crystallinum (Common ice plant).